A 438-amino-acid chain; its full sequence is Asparagine--tRNA ligase (438 aa).

Belongs to the class-II aminoacyl-tRNA synthetase family. Homodimer.

The protein resides in the cytoplasm. It catalyses the reaction tRNA(Asn) + L-asparagine + ATP = L-asparaginyl-tRNA(Asn) + AMP + diphosphate + H(+). The polypeptide is Asparagine--tRNA ligase (Thermus thermophilus (strain ATCC BAA-163 / DSM 7039 / HB27)).